The primary structure comprises 881 residues: Alanine--tRNA ligase (881 aa).

His563, His567, Cys672, and His676 together coordinate Zn(2+).

Belongs to the class-II aminoacyl-tRNA synthetase family. It depends on Zn(2+) as a cofactor.

It localises to the cytoplasm. The catalysed reaction is tRNA(Ala) + L-alanine + ATP = L-alanyl-tRNA(Ala) + AMP + diphosphate. Catalyzes the attachment of alanine to tRNA(Ala) in a two-step reaction: alanine is first activated by ATP to form Ala-AMP and then transferred to the acceptor end of tRNA(Ala). Also edits incorrectly charged Ser-tRNA(Ala) and Gly-tRNA(Ala) via its editing domain. This Azorhizobium caulinodans (strain ATCC 43989 / DSM 5975 / JCM 20966 / LMG 6465 / NBRC 14845 / NCIMB 13405 / ORS 571) protein is Alanine--tRNA ligase.